A 263-amino-acid polypeptide reads, in one-letter code: Glycerol uptake facilitator protein (263 aa).

The Cytoplasmic segment spans residues 1–7 (MNIYRKK). The helical transmembrane segment at 8-36 (NIIKKCFMEFFGTGLVMFFGIGCLAASKL) threads the bilayer. The Extracellular segment spans residues 37–41 (TNANF). A helical membrane pass occupies residues 42–62 (TQFEISCIWGFGVSIAIYFSS). Residues 63 to 65 (SIS) lie on the Cytoplasmic side of the membrane. An intramembrane segment occupies 66–69 (GAHL). The NPA 1 signature appears at 70-72 (NPA). The helical intramembrane region spans 70–80 (NPAVTIFFWLS). Residues 81 to 86 (SKLNKR) are Cytoplasmic-facing. Residues 87-110 (KVLPYIISQTLGSFFFTMLTYYLY) traverse the membrane as a helical segment. Residues 111–145 (NNLLISFERNNNVVRGTQESLNLASIFCVYPNYNN) are Extracellular-facing. A helical membrane pass occupies residues 146–171 (SFIYDFIIEIFSTALFILIVLEFNNR). Over 172-181 (NSNYFLYNRS) the chain is Cytoplasmic. Residues 182–198 (VAPILTGFLVCMINLVI) traverse the membrane as a helical segment. Residues 199–202 (NPLN) are Extracellular-facing. The stretch at 203–206 (NISL) is an intramembrane region. Positions 207 to 209 (NPA) match the NPA 2 motif. Residues 207–220 (NPARDLGPKILLSL) constitute an intramembrane region (helical). Residues 221–236 (TGWGLFSFTGGNDNIL) lie on the Extracellular side of the membrane. Residues 237–259 (YCFIPIMGPILGANLGGWIHKTL) traverse the membrane as a helical segment. Topologically, residues 260-263 (INNS) are cytoplasmic.

Belongs to the MIP/aquaporin (TC 1.A.8) family.

It localises to the cell membrane. It carries out the reaction glycerol(in) = glycerol(out). Its function is as follows. Mediates glycerol diffusion across the cytoplasmic membrane via a pore-type mechanism. The chain is Glycerol uptake facilitator protein (glpF) from Buchnera aphidicola subsp. Acyrthosiphon pisum (strain APS) (Acyrthosiphon pisum symbiotic bacterium).